The sequence spans 560 residues: CTP synthase (560 aa).

The segment at 1-272 (MSIGDVCSAR…DTQILSHFGM (272 aa)) is amidoligase domain. CTP is bound at residue Ser20. Ser20 is a UTP binding site. Residues 21-26 (SLGKGL) and Asp78 contribute to the ATP site. Residues Asp78 and Glu146 each coordinate Mg(2+). Residues 153-155 (DIE), 193-198 (KTKPTQ), and Lys229 contribute to the CTP site. UTP is bound by residues 193-198 (KTKPTQ) and Lys229. One can recognise a Glutamine amidotransferase type-1 domain in the interval 297–539 (TIAIIGKYTK…VQNVLQIKQR (243 aa)). Gly356 is a binding site for L-glutamine. Cys383 functions as the Nucleophile; for glutamine hydrolysis in the catalytic mechanism. L-glutamine is bound by residues 384–387 (MGMQ), Glu407, and Arg467. Active-site residues include His512 and Glu514.

It belongs to the CTP synthase family. In terms of assembly, homotetramer.

The catalysed reaction is UTP + L-glutamine + ATP + H2O = CTP + L-glutamate + ADP + phosphate + 2 H(+). It catalyses the reaction L-glutamine + H2O = L-glutamate + NH4(+). The enzyme catalyses UTP + NH4(+) + ATP = CTP + ADP + phosphate + 2 H(+). Its pathway is pyrimidine metabolism; CTP biosynthesis via de novo pathway; CTP from UDP: step 2/2. With respect to regulation, allosterically activated by GTP, when glutamine is the substrate; GTP has no effect on the reaction when ammonia is the substrate. The allosteric effector GTP functions by stabilizing the protein conformation that binds the tetrahedral intermediate(s) formed during glutamine hydrolysis. Inhibited by the product CTP, via allosteric rather than competitive inhibition. Its function is as follows. Catalyzes the ATP-dependent amination of UTP to CTP with either L-glutamine or ammonia as the source of nitrogen. Regulates intracellular CTP levels through interactions with the four ribonucleotide triphosphates. This chain is CTP synthase, found in Anaplasma marginale (strain Florida).